Consider the following 191-residue polypeptide: Pyridoxal 5'-phosphate synthase subunit PdxT (191 aa).

An L-glutamine-binding site is contributed by 46–48; the sequence is GES. Cys-75 acts as the Nucleophile in catalysis. L-glutamine is bound by residues Arg-101 and 129–130; that span reads IR. Active-site charge relay system residues include His-165 and Glu-167.

This sequence belongs to the glutaminase PdxT/SNO family. As to quaternary structure, in the presence of PdxS, forms a dodecamer of heterodimers. Only shows activity in the heterodimer.

It carries out the reaction aldehydo-D-ribose 5-phosphate + D-glyceraldehyde 3-phosphate + L-glutamine = pyridoxal 5'-phosphate + L-glutamate + phosphate + 3 H2O + H(+). The enzyme catalyses L-glutamine + H2O = L-glutamate + NH4(+). Its pathway is cofactor biosynthesis; pyridoxal 5'-phosphate biosynthesis. In terms of biological role, catalyzes the hydrolysis of glutamine to glutamate and ammonia as part of the biosynthesis of pyridoxal 5'-phosphate. The resulting ammonia molecule is channeled to the active site of PdxS. The sequence is that of Pyridoxal 5'-phosphate synthase subunit PdxT from Staphylococcus saprophyticus subsp. saprophyticus (strain ATCC 15305 / DSM 20229 / NCIMB 8711 / NCTC 7292 / S-41).